The chain runs to 936 residues: Phosphoenolpyruvate carboxylase (936 aa).

The segment at 1 to 20 (MSSLNLSAGPEPVSERPDDA) is disordered. Active-site residues include histidine 164 and lysine 598.

This sequence belongs to the PEPCase type 1 family. Mg(2+) is required as a cofactor.

The enzyme catalyses oxaloacetate + phosphate = phosphoenolpyruvate + hydrogencarbonate. Forms oxaloacetate, a four-carbon dicarboxylic acid source for the tricarboxylic acid cycle. This is Phosphoenolpyruvate carboxylase (ppc) from Rhodopseudomonas palustris (strain ATCC BAA-98 / CGA009).